The chain runs to 474 residues: 6-phospho-beta-galactosidase (474 aa).

The D-galactose 6-phosphate site is built by Gln19, His116, Asn159, Glu160, and Asn297. Catalysis depends on Glu160, which acts as the Proton donor. Glu375 acts as the Nucleophile in catalysis. D-galactose 6-phosphate-binding residues include Ser433, Trp434, Lys440, and Tyr442.

It belongs to the glycosyl hydrolase 1 family.

The enzyme catalyses a 6-phospho-beta-D-galactoside + H2O = D-galactose 6-phosphate + an alcohol. The protein operates within carbohydrate metabolism; lactose degradation; D-galactose 6-phosphate and beta-D-glucose from lactose 6-phosphate: step 1/1. This Lacticaseibacillus casei (Lactobacillus casei) protein is 6-phospho-beta-galactosidase.